The following is a 676-amino-acid chain: DNA ligase (676 aa).

NAD(+)-binding positions include 34–38 (DAEYD), 84–85 (SL), and Glu-116. Catalysis depends on Lys-118, which acts as the N6-AMP-lysine intermediate. Residues Arg-139, Glu-174, Lys-294, and Lys-318 each coordinate NAD(+). Residues Cys-412, Cys-415, Cys-428, and Cys-433 each coordinate Zn(2+). Residues 589-676 (KGGEALKGLT…RTGKKAEELV (88 aa)) enclose the BRCT domain.

It belongs to the NAD-dependent DNA ligase family. LigA subfamily. Requires Mg(2+) as cofactor. Mn(2+) serves as cofactor.

The enzyme catalyses NAD(+) + (deoxyribonucleotide)n-3'-hydroxyl + 5'-phospho-(deoxyribonucleotide)m = (deoxyribonucleotide)n+m + AMP + beta-nicotinamide D-nucleotide.. Functionally, DNA ligase that catalyzes the formation of phosphodiester linkages between 5'-phosphoryl and 3'-hydroxyl groups in double-stranded DNA using NAD as a coenzyme and as the energy source for the reaction. It is essential for DNA replication and repair of damaged DNA. The polypeptide is DNA ligase (Thermus thermophilus (strain ATCC BAA-163 / DSM 7039 / HB27)).